We begin with the raw amino-acid sequence, 632 residues long: Signal-transduction and transcriptional-control protein (632 aa).

Residues 197–270 enclose the PAS domain; sequence TYQYLNKITD…GQSYEDEEIM (74 aa). The Sigma-54 factor interaction domain maps to 324-554; the sequence is IIGQSEAMKR…LENCIENIVN (231 aa). ATP contacts are provided by residues 352–359 and 416–425; these read GESGTGKE and ANEGTLFLDE. Residues 606 to 625 constitute a DNA-binding region (H-T-H motif); that stretch reads ISKACRILGINRSTLYIKIK.

This is Signal-transduction and transcriptional-control protein (stc) from Clostridium beijerinckii (Clostridium MP).